A 305-amino-acid polypeptide reads, in one-letter code: tRNA dimethylallyltransferase (305 aa).

Residue 8–15 participates in ATP binding; sequence GPTAVGKT. Substrate is bound at residue 10-15; it reads TAVGKT. The interval 33–36 is interaction with substrate tRNA; it reads DSRQ.

It belongs to the IPP transferase family. Monomer. Requires Mg(2+) as cofactor.

The catalysed reaction is adenosine(37) in tRNA + dimethylallyl diphosphate = N(6)-dimethylallyladenosine(37) in tRNA + diphosphate. Its function is as follows. Catalyzes the transfer of a dimethylallyl group onto the adenine at position 37 in tRNAs that read codons beginning with uridine, leading to the formation of N6-(dimethylallyl)adenosine (i(6)A). The chain is tRNA dimethylallyltransferase from Thermotoga maritima (strain ATCC 43589 / DSM 3109 / JCM 10099 / NBRC 100826 / MSB8).